The following is a 399-amino-acid chain: Glutathione-independent formaldehyde dehydrogenase (399 aa).

A Zn(2+)-binding site is contributed by Cys-47. 3 residues coordinate NAD(+): Gly-48, Ser-49, and His-52. Residues His-68, Cys-98, Cys-101, Cys-104, Cys-112, and Asp-170 each coordinate Zn(2+). Val-198, Asp-218, Arg-223, Val-263, Arg-268, Pro-300, Gln-338, and Thr-339 together coordinate NAD(+).

This sequence belongs to the zinc-containing alcohol dehydrogenase family. As to quaternary structure, homotetramer. Zn(2+) serves as cofactor.

It catalyses the reaction formaldehyde + NAD(+) + H2O = formate + NADH + 2 H(+). The enzyme catalyses acetaldehyde + NAD(+) + H2O = acetate + NADH + 2 H(+). Dehydrogenase that catalyzes the NAD(+)-dependent oxidation of formaldehyde and acetaldehyde. Shows no detectable activity against either aldehydes with longer carbon chains or ethanol. The polypeptide is Glutathione-independent formaldehyde dehydrogenase (Pseudomonas aeruginosa (strain LESB58)).